The primary structure comprises 406 residues: ATPase ASNA1 homolog (406 aa).

21 to 28 lines the ATP pocket; the sequence is KGGVGKTT. Aspartate 62 is a catalytic residue. Residues glutamate 300 and asparagine 327 each contribute to the ATP site. Positions 339 and 342 each coordinate Zn(2+).

Belongs to the arsA ATPase family. In terms of assembly, homodimer.

The protein resides in the cytoplasm. It localises to the endoplasmic reticulum. ATPase required for the post-translational delivery of tail-anchored (TA) proteins to the endoplasmic reticulum. Recognizes and selectively binds the transmembrane domain of TA proteins in the cytosol. This complex then targets to the endoplasmic reticulum by membrane-bound receptors, where the tail-anchored protein is released for insertion. This process is regulated by ATP binding and hydrolysis. ATP binding drives the homodimer towards the closed dimer state, facilitating recognition of newly synthesized TA membrane proteins. ATP hydrolysis is required for insertion. Subsequently, the homodimer reverts towards the open dimer state, lowering its affinity for the membrane-bound receptor, and returning it to the cytosol to initiate a new round of targeting. The polypeptide is ATPase ASNA1 homolog (Leishmania braziliensis).